The chain runs to 342 residues: MEDLQLVLFILGAIAIVAVLVHGFWSIRRQQPKSLKDSPMGNFYKQQADKESPPKRVDADGFDADGIGAVRVRKVGESNSHETPPISPYLKQDVKAEPKPLFKHTTSTEIKQEPVPQPDFSLQSPLATEQQRGAKVSRQEPVLNGHVPPLGQSHAAMVAQKALEQEKHAQSTTVPTQTALFDEDAYLENTESEDEYVEETVDEGLDEPRDVLVLHVVAKEGQQLNGAELLPCFLTLNFKYGDMNIFHRHVDNAGNGKVLFSIANMLKPGVFDPDNMEQFSTQGVVFFMTLPCYGDALMNFSIMLNSARQLADDIDAVVLDGQRQPWGEFTKQDYLHRIRANA.

Residues M1–L6 lie on the Periplasmic side of the membrane. Residues V7–I27 traverse the membrane as a helical segment. The Cytoplasmic segment spans residues R28–A342. Residues K33–V57 are disordered. Residues Q47 to V57 show a composition bias toward basic and acidic residues.

The protein belongs to the ZipA family. Interacts with FtsZ via their C-terminal domains.

It is found in the cell inner membrane. Its function is as follows. Essential cell division protein that stabilizes the FtsZ protofilaments by cross-linking them and that serves as a cytoplasmic membrane anchor for the Z ring. Also required for the recruitment to the septal ring of downstream cell division proteins. The sequence is that of Cell division protein ZipA from Shewanella putrefaciens (strain CN-32 / ATCC BAA-453).